The chain runs to 717 residues: Nuclear factor of activated T-cells, cytoplasmic 1 (717 aa).

The interval 1–38 is disordered; sequence MPNTSFPVPSKFPLGPPAAVCGSGETLRPAPPSGGTMK. A calcineurin-binding region spans residues 120-125; it reads PRIEIT. Residues 128–220 are transactivation domain A (TAD-A); that stretch reads LGLHHGSGQF…CVSPKTTDPE (93 aa). The disordered stretch occupies residues 202–298; sequence PQTSPWQSPC…PHGSPRVSVT (97 aa). A compositionally biased stretch (polar residues) spans 203 to 216; the sequence is QTSPWQSPCVSPKT. 2 consecutive repeat copies span residues 205–221 and 235–251. Positions 205–300 are 3 X SP repeats; sequence SPWQSPCVSP…GSPRVSVTED (96 aa). Ser235 and Ser239 each carry phosphoserine. Over residues 238 to 250 the composition is skewed to polar residues; sequence HSPSTSPRASITE. Ser247 carries the post-translational modification Phosphoserine; by PKA. The short motif at 267–269 is the Nuclear localization signal element; that stretch reads KRK. 2 positions are modified to phosphoserine; by PKA: Ser271 and Ser296. Residues 284-300 form repeat 3; that stretch reads SPTPSPHGSPRVSVTED. The Nuclear export signal motif lies at 312-323; it reads SAIVAAINALTT. The 183-residue stretch at 411-593 folds into the RHD domain; sequence PSLPALDWQL…NPIECSQRSA (183 aa). Residues 440 to 447 mediate DNA binding; the sequence is RAHYETEG. Residues 683–685 carry the Nuclear localization signal motif; that stretch reads KRK.

As to quaternary structure, member of the multicomponent NFATC transcription complex that consists of at least two components, a pre-existing cytoplasmic component NFATC2 and an inducible nuclear component NFATC1. Other members such as NFATC4, NFATC3 or members of the activating protein-1 family, MAF, GATA4 and Cbp/p300 can also bind the complex. NFATC proteins bind to DNA as monomers. Interacts with HOMER2 and HOMER3; this interaction may compete with calcineurin/PPP3CA-binding and hence prevent NFATC1 dephosphorylation and activation. Interacts with TLE6/GRG6. Post-translationally, phosphorylated by NFATC-kinase and GSK3B; phosphorylation induces NFATC1 nuclear exit and dephosphorylation by calcineurin promotes nuclear import. Phosphorylation by PKA and DYRK2 negatively modulates nuclear accumulation, and promotes subsequent phosphorylation by GSK3B or casein kinase 1. As to expression, expressed in the submandibular gland (at protein level). Expressed in basal epidermal cells (at protein level). Expressed in spleen, skeletal muscle and skin. Express in the lung and thymus. Weakly expressed in heart, brain, liver and kidney. Not expressed in testis. Expressed in osteoclasts. Also expressed during TNFSF11/RANKL-induced differentiation of bone marrow-derived macrophages to osteoclasts.

It is found in the cytoplasm. The protein localises to the nucleus. Its function is as follows. Plays a role in the inducible expression of cytokine genes in T-cells, especially in the induction of the IL-2 or IL-4 gene transcription. Also controls gene expression in embryonic cardiac cells. Could regulate not only the activation and proliferation but also the differentiation and programmed death of T-lymphocytes as well as lymphoid and non-lymphoid cells. Required for osteoclastogenesis and regulates many genes important for osteoclast differentiation and function. In Mus musculus (Mouse), this protein is Nuclear factor of activated T-cells, cytoplasmic 1 (Nfatc1).